We begin with the raw amino-acid sequence, 287 residues long: Merozoite surface protein 2 (287 aa).

A signal peptide spans 1–20 (MKVIKTLSIINFFIFVTFNI). N-linked (GlcNAc...) asparagine glycosylation is found at Asn22 and Asn36. The interval 42–248 (SMTESNPPTG…DSQKECTDGN (207 aa)) is disordered. The segment at 44-213 (TESNPPTGAS…EQTESPELQS (170 aa)) is polymorphic region. A compositionally biased stretch (gly residues) spans 54 to 112 (GSAGGSAGGSAGGSAGGSAGGSAGGSAGGSAGGSAGGSAGGSAGGSAGGSAGSGDGNGA). 12 tandem repeats follow at residues 55-58 (SAGG), 59-62 (SAGG), 63-66 (SAGG), 67-70 (SAGG), 71-74 (SAGG), 75-78 (SAGG), 79-82 (SAGG), 83-86 (SAGG), 87-90 (SAGG), 91-94 (SAGG), 95-98 (SAGG), and 99-102 (SAGG). Residues 55-102 (SAGGSAGGSAGGSAGGSAGGSAGGSAGGSAGGSAGGSAGGSAGGSAGG) are 12 X 4 AA tandem repeats of S-A-G-G. Over residues 121–149 (SPSTPATTTTTTTTNDAEASTSTSSENPN) the composition is skewed to low complexity. 2 stretches are compositionally biased toward polar residues: residues 150-180 (HNNA…NVPP) and 187-215 (KSPT…QSAP). A glycan (N-linked (GlcNAc...) asparagine) is linked at Asn164. Asn236 carries N-linked (GlcNAc...) asparagine glycosylation. A disulfide bridge connects residues Cys244 and Cys252. N-linked (GlcNAc...) asparagine glycosylation is found at Asn260 and Asn261. A lipid anchor (GPI-anchor amidated asparagine) is attached at Asn261. Residues 262–287 (SSNIASINKFVVLISATLVLSFAIFI) constitute a propeptide, removed in mature form.

It localises to the cell membrane. In terms of biological role, may play a role in the merozoite attachment to the erythrocyte. This Plasmodium falciparum (isolate FCR-3 / Gambia) protein is Merozoite surface protein 2.